The sequence spans 281 residues: NADPH-dependent 7-cyano-7-deazaguanine reductase (281 aa).

81 to 83 (IES) is a substrate binding site. 83 to 84 (SK) is a binding site for NADPH. The active-site Thioimide intermediate is Cys188. Asp195 (proton donor) is an active-site residue. A substrate-binding site is contributed by 227–228 (HE). 256-257 (RG) is a binding site for NADPH.

The protein belongs to the GTP cyclohydrolase I family. QueF type 2 subfamily. In terms of assembly, homodimer.

The protein localises to the cytoplasm. The catalysed reaction is 7-aminomethyl-7-carbaguanine + 2 NADP(+) = 7-cyano-7-deazaguanine + 2 NADPH + 3 H(+). Its pathway is tRNA modification; tRNA-queuosine biosynthesis. Its function is as follows. Catalyzes the NADPH-dependent reduction of 7-cyano-7-deazaguanine (preQ0) to 7-aminomethyl-7-deazaguanine (preQ1). This is NADPH-dependent 7-cyano-7-deazaguanine reductase from Polaromonas naphthalenivorans (strain CJ2).